The primary structure comprises 358 residues: Fructose-bisphosphate aldolase 1, cytoplasmic (358 aa).

Arg-39 contributes to the substrate binding site. The Proton acceptor role is filled by Glu-183. Lys-225 (schiff-base intermediate with dihydroxyacetone-P) is an active-site residue. Residues 266–268 (SGG) and Arg-298 each bind substrate.

It belongs to the class I fructose-bisphosphate aldolase family. As to quaternary structure, homotetramer. In terms of tissue distribution, expressed in callus.

The protein localises to the cytoplasm. Its subcellular location is the cytosol. It carries out the reaction beta-D-fructose 1,6-bisphosphate = D-glyceraldehyde 3-phosphate + dihydroxyacetone phosphate. It participates in carbohydrate degradation; glycolysis; D-glyceraldehyde 3-phosphate and glycerone phosphate from D-glucose: step 4/4. Its function is as follows. Fructose-bisphosphate aldolase that plays a key role in glycolysis and gluconeogenesis. Involved in gibberellin-mediated root growth. May be regulated by CDPK13. Associates with vacuolar proton ATPase (V-ATPase) and may regulate the V-ATPase-mediated control of root cell elongation. This Oryza sativa subsp. japonica (Rice) protein is Fructose-bisphosphate aldolase 1, cytoplasmic.